Here is a 136-residue protein sequence, read N- to C-terminus: D-ribose pyranase (136 aa).

The active-site Proton donor is the His20. Residues Asp28, His98, and 120 to 122 (YAN) contribute to the substrate site.

Belongs to the RbsD / FucU family. RbsD subfamily. In terms of assembly, homodecamer.

Its subcellular location is the cytoplasm. It catalyses the reaction beta-D-ribopyranose = beta-D-ribofuranose. It participates in carbohydrate metabolism; D-ribose degradation; D-ribose 5-phosphate from beta-D-ribopyranose: step 1/2. In terms of biological role, catalyzes the interconversion of beta-pyran and beta-furan forms of D-ribose. The polypeptide is D-ribose pyranase (Geobacillus kaustophilus (strain HTA426)).